We begin with the raw amino-acid sequence, 645 residues long: Translation factor GUF1, mitochondrial (645 aa).

Residues 44–228 (ENYRNFSIVA…AIIDRIPPPT (185 aa)) enclose the tr-type G domain. GTP contacts are provided by residues 53-60 (AHVDHGKS), 120-124 (DTPGH), and 174-177 (NKID).

Belongs to the TRAFAC class translation factor GTPase superfamily. Classic translation factor GTPase family. LepA subfamily.

It is found in the mitochondrion inner membrane. It carries out the reaction GTP + H2O = GDP + phosphate + H(+). Promotes mitochondrial protein synthesis. May act as a fidelity factor of the translation reaction, by catalyzing a one-codon backward translocation of tRNAs on improperly translocated ribosomes. Binds to mitochondrial ribosomes in a GTP-dependent manner. This is Translation factor GUF1, mitochondrial from Saccharomyces cerevisiae (strain RM11-1a) (Baker's yeast).